Here is a 652-residue protein sequence, read N- to C-terminus: DNA ligase (652 aa).

NAD(+) contacts are provided by residues 29-33, 78-79, and glutamate 107; these read DSDYD and SL. Lysine 109 (N6-AMP-lysine intermediate) is an active-site residue. 4 residues coordinate NAD(+): arginine 130, glutamate 164, lysine 278, and lysine 302. Cysteine 395, cysteine 398, cysteine 413, and cysteine 418 together coordinate Zn(2+). One can recognise a BRCT domain in the interval 577–652; the sequence is NSDAALFGLT…IEDEDWLRQL (76 aa).

Belongs to the NAD-dependent DNA ligase family. LigA subfamily. It depends on Mg(2+) as a cofactor. Mn(2+) is required as a cofactor.

The catalysed reaction is NAD(+) + (deoxyribonucleotide)n-3'-hydroxyl + 5'-phospho-(deoxyribonucleotide)m = (deoxyribonucleotide)n+m + AMP + beta-nicotinamide D-nucleotide.. In terms of biological role, DNA ligase that catalyzes the formation of phosphodiester linkages between 5'-phosphoryl and 3'-hydroxyl groups in double-stranded DNA using NAD as a coenzyme and as the energy source for the reaction. It is essential for DNA replication and repair of damaged DNA. This chain is DNA ligase, found in Streptococcus pyogenes serotype M1.